Reading from the N-terminus, the 99-residue chain is Small ribosomal subunit protein uS14m (99 aa).

Belongs to the universal ribosomal protein uS14 family.

It localises to the mitochondrion. The chain is Small ribosomal subunit protein uS14m (RPS14) from Marchantia polymorpha (Common liverwort).